Consider the following 64-residue polypeptide: Weak toxin CM-9a (64 aa).

Intrachain disulfides connect Cys-3–Cys-24, Cys-6–Cys-11, Cys-17–Cys-41, Cys-45–Cys-56, and Cys-57–Cys-62.

It belongs to the three-finger toxin family. Ancestral subfamily. Orphan group II sub-subfamily. As to expression, expressed by the venom gland.

It is found in the secreted. Its function is as follows. Binds with low affinity to muscular (alpha-1-beta-1-delta-epsilon/CHRNA1-CHRNB1-CHRND-CHRNE) and very low affinity to neuronal (alpha-7/CHRNA7) nicotinic acetylcholine receptor (nAChR). This chain is Weak toxin CM-9a, found in Naja kaouthia (Monocled cobra).